Consider the following 59-residue polypeptide: Photosystem II reaction center protein K (59 aa).

The propeptide occupies 1-22 (MLNIFSLICLNSALHSSSFFFA). The helical transmembrane segment at 38 to 58 (MPVIPVLFFLLALVWQAAVSF) threads the bilayer.

Belongs to the PsbK family. In terms of assembly, PSII is composed of 1 copy each of membrane proteins PsbA, PsbB, PsbC, PsbD, PsbE, PsbF, PsbH, PsbI, PsbJ, PsbK, PsbL, PsbM, PsbT, PsbX, PsbY, PsbZ, Psb30/Ycf12, at least 3 peripheral proteins of the oxygen-evolving complex and a large number of cofactors. It forms dimeric complexes.

The protein localises to the plastid. Its subcellular location is the chloroplast thylakoid membrane. Its function is as follows. One of the components of the core complex of photosystem II (PSII). PSII is a light-driven water:plastoquinone oxidoreductase that uses light energy to abstract electrons from H(2)O, generating O(2) and a proton gradient subsequently used for ATP formation. It consists of a core antenna complex that captures photons, and an electron transfer chain that converts photonic excitation into a charge separation. The polypeptide is Photosystem II reaction center protein K (Calycanthus floridus var. glaucus (Eastern sweetshrub)).